A 103-amino-acid polypeptide reads, in one-letter code: Small ribosomal subunit protein uS10 (103 aa).

Belongs to the universal ribosomal protein uS10 family. In terms of assembly, part of the 30S ribosomal subunit.

Its function is as follows. Involved in the binding of tRNA to the ribosomes. The polypeptide is Small ribosomal subunit protein uS10 (Actinobacillus pleuropneumoniae serotype 5b (strain L20)).